The following is a 142-amino-acid chain: Large ribosomal subunit protein uL13 (142 aa).

Belongs to the universal ribosomal protein uL13 family. In terms of assembly, part of the 50S ribosomal subunit.

Functionally, this protein is one of the early assembly proteins of the 50S ribosomal subunit, although it is not seen to bind rRNA by itself. It is important during the early stages of 50S assembly. The polypeptide is Large ribosomal subunit protein uL13 (Pyrococcus horikoshii (strain ATCC 700860 / DSM 12428 / JCM 9974 / NBRC 100139 / OT-3)).